The sequence spans 177 residues: CDP-diacylglycerol--serine O-phosphatidyltransferase (177 aa).

Transmembrane regions (helical) follow at residues 4–24 (IPCMITIGNFICGLLAIHSLL), 28–48 (IHSAVLFIFTGMFLDFFDGMA), 77–97 (MLAYSVALYTLPFIGILCALT), 116–136 (LPTFIGMPIPFAGMCLVILSF), and 140–160 (PILLAIGTCGLSYLMVSKIKF).

This sequence belongs to the CDP-alcohol phosphatidyltransferase class-I family.

The protein localises to the cell membrane. It catalyses the reaction a CDP-1,2-diacyl-sn-glycerol + L-serine = a 1,2-diacyl-sn-glycero-3-phospho-L-serine + CMP + H(+). This is CDP-diacylglycerol--serine O-phosphatidyltransferase (pssA) from Bacillus subtilis (strain 168).